The chain runs to 851 residues: UPF0508 protein CAGL0M08074g (851 aa).

The protein belongs to the UPF0508 family.

This Candida glabrata (strain ATCC 2001 / BCRC 20586 / JCM 3761 / NBRC 0622 / NRRL Y-65 / CBS 138) (Yeast) protein is UPF0508 protein CAGL0M08074g.